The chain runs to 299 residues: ATP phosphoribosyltransferase (299 aa).

Belongs to the ATP phosphoribosyltransferase family. Long subfamily. It depends on Mg(2+) as a cofactor.

The protein localises to the cytoplasm. The enzyme catalyses 1-(5-phospho-beta-D-ribosyl)-ATP + diphosphate = 5-phospho-alpha-D-ribose 1-diphosphate + ATP. It participates in amino-acid biosynthesis; L-histidine biosynthesis; L-histidine from 5-phospho-alpha-D-ribose 1-diphosphate: step 1/9. Its activity is regulated as follows. Feedback inhibited by histidine. Catalyzes the condensation of ATP and 5-phosphoribose 1-diphosphate to form N'-(5'-phosphoribosyl)-ATP (PR-ATP). Has a crucial role in the pathway because the rate of histidine biosynthesis seems to be controlled primarily by regulation of HisG enzymatic activity. The sequence is that of ATP phosphoribosyltransferase from Shewanella sediminis (strain HAW-EB3).